The chain runs to 699 residues: Large T antigen (699 aa).

M1 is subject to N-acetylmethionine; by host. One can recognise a J domain in the interval E12–G75. Positions L105–E109 match the LXCXE motif motif. 3 positions are modified to phosphoserine; by host: S114, S122, and S125. Positions D115 to P137 are disordered. The residue at position 126 (T126) is a Phosphothreonine; by host. A Nuclear localization signal motif is present at residues P127–V134. Residues P141–E256 constitute a DNA-binding region (T-ag OBD). A T-ag D1-type zinc finger spans residues T267 to R359. Residues C304, C307, H315, and H319 each coordinate Zn(2+). Residues K402–S562 enclose the SF3 helicase domain. G428–T435 contributes to the ATP binding site. The disordered stretch occupies residues E637–D678. The segment covering H643 to P672 has biased composition (polar residues). S661 carries the post-translational modification Phosphoserine; by host. Residue K691 is modified to N6-acetyllysine; by host. At T695 the chain carries Phosphothreonine; by host.

Forms homohexamers in the presence of ATP. Interacts with host HDAC1. Interacts (via LXCXE domain) with host RB1; the interaction induces the aberrant dissociation of RB1-E2F1 complex thereby disrupting RB1's activity. Interacts (via LXCXE domain) with host pRB-related proteins RBL1 and RBL2. Interacts (via C-terminus) with host TOP1 and POLA1 allowing DNA replication. Interacts with host TP53, inhibiting TP53 binding to DNA. Interacts with host preinitiation complex components TBP, TFIIA and TFIID to regulate transcription initiation. Mg(2+) serves as cofactor. In terms of processing, phosphorylated on both serine and threonine residues. Small t antigen inhibits the dephosphorylation by the AC form of PP2A. O-Glycosylated near the C-terminal region. Post-translationally, acetylated by CBP in a TP53-dependent manner.

The protein localises to the host nucleus. It carries out the reaction Couples ATP hydrolysis with the unwinding of duplex DNA by translocating in the 3'-5' direction.. It catalyses the reaction ATP + H2O = ADP + phosphate + H(+). In terms of biological role, isoform large T antigen is a key early protein essential for both driving viral replication and inducing cellular transformation. Plays a role in viral genome replication by driving entry of quiescent cells into the cell cycle and by autoregulating the synthesis of viral early mRNA. Displays highly oncogenic activities by corrupting the host cellular checkpoint mechanisms that guard cell division and the transcription, replication, and repair of DNA. Participates in the modulation of cellular gene expression preceeding viral DNA replication. This step involves binding to host key cell cycle regulators retinoblastoma protein RB1/pRb and TP53. Induces the disassembly of host E2F1 transcription factors from RB1, thus promoting transcriptional activation of E2F1-regulated S-phase genes. Inhibits host TP53 binding to DNA, abrogating the ability of TP53 to stimulate gene expression. Plays the role of a TFIID-associated factor (TAF) in transcription initiation for all three RNA polymerases, by stabilizing the TBP-TFIIA complex on promoters. Initiates viral DNA replication and unwinding via interactions with the viral origin of replication. Binds two adjacent sites in the SV40 origin. The replication fork movement is facilitated by Large T antigen helicase activity. Has processive 3'-5' DNA helicase activity which requires a short 3' single-stranded region and ATP. Activates the transcription of viral late mRNA, through host TBP and TFIIA stabilization. Interferes with histone deacetylation mediated by HDAC1, leading to activation of transcription. In Papio hamadryas ursinus (Chacma baboon), this protein is Large T antigen.